A 150-amino-acid chain; its full sequence is Large ribosomal subunit protein bL9 (150 aa).

This sequence belongs to the bacterial ribosomal protein bL9 family.

In terms of biological role, binds to the 23S rRNA. This is Large ribosomal subunit protein bL9 from Vibrio parahaemolyticus serotype O3:K6 (strain RIMD 2210633).